Consider the following 209-residue polypeptide: Large ribosomal subunit protein uL3 (209 aa).

Belongs to the universal ribosomal protein uL3 family. In terms of assembly, part of the 50S ribosomal subunit. Forms a cluster with proteins L14 and L19.

One of the primary rRNA binding proteins, it binds directly near the 3'-end of the 23S rRNA, where it nucleates assembly of the 50S subunit. This Nitratidesulfovibrio vulgaris (strain ATCC 29579 / DSM 644 / CCUG 34227 / NCIMB 8303 / VKM B-1760 / Hildenborough) (Desulfovibrio vulgaris) protein is Large ribosomal subunit protein uL3.